The following is a 310-amino-acid chain: Small ribosomal subunit protein uS2 (310 aa).

Disordered stretches follow at residues 213–240 (EEQAALARQQEEANAGTTAGFSEWGGAA) and 271–310 (WDSVAPGATDDWGAEPAAPSSDWGTAVTMQEQAKPSTDWA). The span at 216 to 227 (AALARQQEEANA) shows a compositional bias: low complexity. Residues 297–310 (VTMQEQAKPSTDWA) are compositionally biased toward polar residues.

It belongs to the universal ribosomal protein uS2 family. As to quaternary structure, component of the small ribosomal subunit. Mature ribosomes consist of a small (40S) and a large (60S) subunit. The 40S subunit contains about 33 different proteins and 1 molecule of RNA (18S). The 60S subunit contains about 49 different proteins and 3 molecules of RNA (28S, 5.8S and 5S). Interacts with ribosomal protein S21.

Its subcellular location is the cytoplasm. In terms of biological role, required for the assembly and/or stability of the 40S ribosomal subunit. Required for the processing of the 20S rRNA-precursor to mature 18S rRNA in a late step of the maturation of 40S ribosomal subunits. This chain is Small ribosomal subunit protein uS2, found in Nematostella vectensis (Starlet sea anemone).